The sequence spans 454 residues: Glutamyl-tRNA(Gln) amidotransferase subunit A (454 aa).

Residues K56 and S131 each act as charge relay system in the active site. S155 acts as the Acyl-ester intermediate in catalysis.

Belongs to the amidase family. GatA subfamily. In terms of assembly, heterotrimer of A, B and C subunits.

It catalyses the reaction L-glutamyl-tRNA(Gln) + L-glutamine + ATP + H2O = L-glutaminyl-tRNA(Gln) + L-glutamate + ADP + phosphate + H(+). In terms of biological role, allows the formation of correctly charged Gln-tRNA(Gln) through the transamidation of misacylated Glu-tRNA(Gln) in organisms which lack glutaminyl-tRNA synthetase. The reaction takes place in the presence of glutamine and ATP through an activated gamma-phospho-Glu-tRNA(Gln). In Campylobacter lari (strain RM2100 / D67 / ATCC BAA-1060), this protein is Glutamyl-tRNA(Gln) amidotransferase subunit A.